The sequence spans 866 residues: Probable outer membrane usher protein ElfC (866 aa).

The first 35 residues, M1 to A35, serve as a signal peptide directing secretion.

This sequence belongs to the fimbrial export usher family.

It is found in the cell outer membrane. Part of the elfADCG fimbrial operon, which could be required for adherence to host epithelial cells. Could be involved in the export and assembly of the ElfA fimbrial subunits across the outer membrane. The sequence is that of Probable outer membrane usher protein ElfC (elfC) from Escherichia coli O157:H7.